We begin with the raw amino-acid sequence, 84 residues long: U1-theraphotoxin-Hs1a (84 aa).

The first 22 residues, 1–22 (MKVTLIAILTCAAVLVLHTTAA), serve as a signal peptide directing secretion. Residues 23 to 48 (EELEESQLMEVGMPDTELAAVDEERL) constitute a propeptide that is removed on maturation. 3 disulfides stabilise this stretch: Cys51/Cys65, Cys55/Cys76, and Cys70/Cys81.

The protein belongs to the neurotoxin 12 (Hwtx-2) family. 02 (Hwtx-2) subfamily. As to expression, expressed by the venom gland.

The protein resides in the secreted. Functionally, blocks neuromuscular transmission. Acts cooperatively to potentiate the activity of huwentoxin-I. Paralyzes locusts and kills mice following intracerebroventricular injection. This chain is U1-theraphotoxin-Hs1a, found in Cyriopagopus schmidti (Chinese bird spider).